Reading from the N-terminus, the 904-residue chain is Alanine--tRNA ligase (904 aa).

4 residues coordinate Zn(2+): histidine 603, histidine 607, cysteine 707, and histidine 711.

The protein belongs to the class-II aminoacyl-tRNA synthetase family. Requires Zn(2+) as cofactor.

The protein resides in the cytoplasm. The enzyme catalyses tRNA(Ala) + L-alanine + ATP = L-alanyl-tRNA(Ala) + AMP + diphosphate. Its function is as follows. Catalyzes the attachment of alanine to tRNA(Ala) in a two-step reaction: alanine is first activated by ATP to form Ala-AMP and then transferred to the acceptor end of tRNA(Ala). Also edits incorrectly charged Ser-tRNA(Ala) and Gly-tRNA(Ala) via its editing domain. The sequence is that of Alanine--tRNA ligase from Sulfurisphaera tokodaii (strain DSM 16993 / JCM 10545 / NBRC 100140 / 7) (Sulfolobus tokodaii).